The following is a 333-amino-acid chain: MAVHQYTVALFLAVALVAGPAASYAADVGYGAPATLATPATPAAPAAGYTPAAPAGAAPKATTDEQKLIEKINAGFKAAVAAAAGVPAVDKYKTFVATFGTASNKAFAEALSTEPKGAAAASSNAVLTSKLDAAYKLAYKSAEGATPEAKYDAYVATLSEALRIIAGTLEVHAVKPAGEEVKAIPAGELQVIDKVDAAFKVAATAANAAPANDKFTVFEAAFNDAIKASTGGAYQSYKFIPALEAAVKQSYAATVATAPAVKYTVFETALKKAITAMSQAQKAAKPAAAVTATATGAVGAATGAVGAATGAATAAAGGYKTGAATPTAGGYKV.

Positions 1-23 (MAVHQYTVALFLAVALVAGPAAS) are cleaved as a signal peptide. 2 tandem repeats follow at residues 309–320 (TGAATAAAGGYK) and 321–332 (TGAATPTAGGYK). A 2 X 12 AA tandem repeats region spans residues 309–332 (TGAATAAAGGYKTGAATPTAGGYK).

Belongs to the Poa p IX/Phl p VI allergen family. As to expression, pollen.

The protein is Pollen allergen KBG 41 of Poa pratensis (Kentucky bluegrass).